Here is a 395-residue protein sequence, read N- to C-terminus: MRRLFTSESVTEGHPDKIADQISDAILDAMLEQDPRSRVAVETLVTTGLVIIAGEVTTRAYVEIPDIARKTILEIGYTRAKYGFDGETCGVLTSIHSQSPDIALGVDKALEVKTGEEVADEFEALGAGDQGIMFGYATNETPEYMPLPITLAHKLAMRLAEVRKNGTLPFLRPDGKTQVTIEYEDDKPVRVDTVLISTQHDPDISQADLREAIIEHVINPVIPEQYRDDKMKILVNPTGRFVLGGPMADTGLTGRKIIVDTYGGWVPHGGGAFSGKDPTKVDRSAHYMARYVAKNVVAAGLADKFLIQLSYAIGVAKPVSIMIDTYGTAKVDEDKLLKVITELFDFRPGAIIKKLNLLRPIYRKTAAYGHFGRNEEEFTWEKLDMVDELKRAFNM.

His-14 contacts ATP. Asp-16 provides a ligand contact to Mg(2+). Glu-42 is a K(+) binding site. Residues Glu-55 and Gln-98 each contribute to the L-methionine site. The interval 98 to 108 (QSPDIALGVDK) is flexible loop. ATP-binding positions include 174–176 (DGK), 240–241 (RF), Asp-249, 255–256 (RK), Ala-272, and Lys-276. An L-methionine-binding site is contributed by Asp-249. Lys-280 is a binding site for L-methionine.

Belongs to the AdoMet synthase family. As to quaternary structure, homotetramer; dimer of dimers. Mg(2+) serves as cofactor. It depends on K(+) as a cofactor.

The protein localises to the cytoplasm. It carries out the reaction L-methionine + ATP + H2O = S-adenosyl-L-methionine + phosphate + diphosphate. It functions in the pathway amino-acid biosynthesis; S-adenosyl-L-methionine biosynthesis; S-adenosyl-L-methionine from L-methionine: step 1/1. Catalyzes the formation of S-adenosylmethionine (AdoMet) from methionine and ATP. The overall synthetic reaction is composed of two sequential steps, AdoMet formation and the subsequent tripolyphosphate hydrolysis which occurs prior to release of AdoMet from the enzyme. The sequence is that of S-adenosylmethionine synthase from Thermotoga maritima (strain ATCC 43589 / DSM 3109 / JCM 10099 / NBRC 100826 / MSB8).